The chain runs to 283 residues: GTPase Era (283 aa).

One can recognise an Era-type G domain in the interval 7 to 175 (YCGHVIIVGK…KNIIKSYLPE (169 aa)). A G1 region spans residues 15-22 (GKANVGKS). Residue 15–22 (GKANVGKS) coordinates GTP. The tract at residues 41 to 45 (NTTQS) is G2. Residues 62–65 (DTPG) form a G3 region. GTP-binding positions include 62 to 66 (DTPGV) and 124 to 127 (NKID). The G4 stretch occupies residues 124–127 (NKID). The interval 154 to 156 (ISA) is G5. Residues 198–283 (IREQLILFLG…HLVLWVKDKN (86 aa)) enclose the KH type-2 domain.

It belongs to the TRAFAC class TrmE-Era-EngA-EngB-Septin-like GTPase superfamily. Era GTPase family. Monomer.

The protein resides in the cytoplasm. Its subcellular location is the cell membrane. Functionally, an essential GTPase that binds both GDP and GTP, with rapid nucleotide exchange. Plays a role in 16S rRNA processing and 30S ribosomal subunit biogenesis and possibly also in cell cycle regulation and energy metabolism. The chain is GTPase Era from Buchnera aphidicola subsp. Acyrthosiphon pisum (strain APS) (Acyrthosiphon pisum symbiotic bacterium).